Here is a 441-residue protein sequence, read N- to C-terminus: Ribosomal protein uS12 methylthiotransferase RimO (441 aa).

Positions 8-118 (PKIGFVSLGC…VLEHVHHYVP (111 aa)) constitute an MTTase N-terminal domain. Residues Cys17, Cys53, Cys82, Cys150, Cys154, and Cys157 each contribute to the [4Fe-4S] cluster site. The Radical SAM core domain occupies 136–373 (LTPRHYAYLK…MQLQQQISAE (238 aa)). Residues 376–441 (QEKVGREILV…DEYDLWGSRV (66 aa)) enclose the TRAM domain.

It belongs to the methylthiotransferase family. RimO subfamily. [4Fe-4S] cluster is required as a cofactor.

It localises to the cytoplasm. It catalyses the reaction L-aspartate(89)-[ribosomal protein uS12]-hydrogen + (sulfur carrier)-SH + AH2 + 2 S-adenosyl-L-methionine = 3-methylsulfanyl-L-aspartate(89)-[ribosomal protein uS12]-hydrogen + (sulfur carrier)-H + 5'-deoxyadenosine + L-methionine + A + S-adenosyl-L-homocysteine + 2 H(+). In terms of biological role, catalyzes the methylthiolation of an aspartic acid residue of ribosomal protein uS12. In Escherichia coli (strain SMS-3-5 / SECEC), this protein is Ribosomal protein uS12 methylthiotransferase RimO.